The following is a 236-amino-acid chain: Ribitol-5-phosphate cytidylyltransferase (236 aa).

CTP is bound by residues Leu-7–Gly-10 and Gly-80–Thr-86.

It belongs to the IspD/TarI cytidylyltransferase family. TarI subfamily.

The catalysed reaction is D-ribitol 5-phosphate + CTP + H(+) = CDP-L-ribitol + diphosphate. It functions in the pathway cell wall biogenesis; poly(ribitol phosphate) teichoic acid biosynthesis. Functionally, catalyzes the transfer of the cytidylyl group of CTP to D-ribitol 5-phosphate. The polypeptide is Ribitol-5-phosphate cytidylyltransferase (Listeria monocytogenes serovar 1/2a (strain ATCC BAA-679 / EGD-e)).